Here is a 288-residue protein sequence, read N- to C-terminus: Stage IV sporulation protein FB (288 aa).

The Mother cell cytoplasmic segment spans residues 1 to 10 (MNKWLDLILK). A helical membrane pass occupies residues 11-30 (IHVHPFLWIIAALGLLTGHM). A topological domain (forespore intermembrane space) is located at residue lysine 31. Residues 32-56 (ALLCLLLIVLIHELGHAALAVFFSW) traverse the membrane as a helical segment. Histidine 43 lines the Zn(2+) pocket. Glutamate 44 is an active-site residue. Zn(2+) is bound at residue histidine 47. The Mother cell cytoplasmic portion of the chain corresponds to 57–83 (RIKRVFLLPFGGTVEVEEHGNRPLKEE). Residues 84–105 (FAVIIAGPLQHIWLQFAAWMLA) traverse the membrane as a helical segment. The Forespore intermembrane space segment spans residues 106-126 (EVSVIHQHTFELFTFYNLSIL). The chain crosses the membrane as a helical span at residues 127–146 (FVNLLPIWPLDGGKLLFLLF). Aspartate 137 lines the Zn(2+) pocket. Residues 147-161 (SKQLPFQKAHRLNLK) lie on the Mother cell cytoplasmic side of the membrane. Residues 162–178 (TSLCFCLLLGCWVLFVI) traverse the membrane as a helical segment. Position 179 (proline 179) is a topological domain, forespore intermembrane space. A helical transmembrane segment spans residues 180-199 (LQISAWVLFVFLAVSLFEEY). Topologically, residues 200–288 (RQRHYIHVRF…SSMEELLLPY (89 aa)) are mother cell cytoplasmic.

This sequence belongs to the peptidase M50B family. In terms of assembly, forms a complex with SpoIVFA and BofA localized in the mother-cell membrane surrounding the forespore. The cofactor is Zn(2+).

It is found in the forespore outer membrane. Implicated in the coupling of mother cell to forespore gene expression. Required for spore formation. Processes the pro-sigma K factor. The sequence is that of Stage IV sporulation protein FB (spoIVFB) from Bacillus subtilis (strain 168).